The primary structure comprises 842 residues: Probable vinculin (842 aa).

Residues Lys-585–Ala-679 are a coiled coil.

The protein belongs to the vinculin/alpha-catenin family. As to quaternary structure, monomer. Associates with F-actin. Interacts with aarA, ctxA, ctxB and rgaA. As to expression, epithelium.

The protein resides in the cytoplasm. It is found in the cell cortex. Its subcellular location is the cell junction. Involved in cell adhesion. Thought to play an important role in cytokinesis B, probably by providing substrate adhesion and traction forces. Required to organize and polarize the tip epithelium during cytokinesis. Required for the normal distribution of myosin in the tip epithelium. Involved in the localization of ctxA, ctxB, dcsA, exoc6 and rgaA. Thought to form a complex with ctxA, ctxB, and rgaA which regulates myosin accumulation to the apical plasma membrane. The protein is Probable vinculin (ctnnA) of Dictyostelium discoideum (Social amoeba).